A 226-amino-acid polypeptide reads, in one-letter code: Large ribosomal subunit protein uL1 (226 aa).

This sequence belongs to the universal ribosomal protein uL1 family. In terms of assembly, part of the 50S ribosomal subunit.

Its function is as follows. Binds directly to 23S rRNA. The L1 stalk is quite mobile in the ribosome, and is involved in E site tRNA release. Protein L1 is also a translational repressor protein, it controls the translation of the L11 operon by binding to its mRNA. In Mycoplasma capricolum subsp. capricolum (strain California kid / ATCC 27343 / NCTC 10154), this protein is Large ribosomal subunit protein uL1.